The sequence spans 347 residues: Probable dual-specificity RNA methyltransferase RlmN (347 aa).

Glu91 (proton acceptor) is an active-site residue. In terms of domain architecture, Radical SAM core spans 97-327 (YKYGNSICVS…ATVRREMGSD (231 aa)). Cys104 and Cys332 are joined by a disulfide. [4Fe-4S] cluster contacts are provided by Cys111, Cys115, and Cys118. S-adenosyl-L-methionine-binding positions include 158–159 (GE), Ser190, 213–215 (SLH), and Asn289. Residue Cys332 is the S-methylcysteine intermediate of the active site.

This sequence belongs to the radical SAM superfamily. RlmN family. [4Fe-4S] cluster is required as a cofactor.

The protein resides in the cytoplasm. It catalyses the reaction adenosine(2503) in 23S rRNA + 2 reduced [2Fe-2S]-[ferredoxin] + 2 S-adenosyl-L-methionine = 2-methyladenosine(2503) in 23S rRNA + 5'-deoxyadenosine + L-methionine + 2 oxidized [2Fe-2S]-[ferredoxin] + S-adenosyl-L-homocysteine. The catalysed reaction is adenosine(37) in tRNA + 2 reduced [2Fe-2S]-[ferredoxin] + 2 S-adenosyl-L-methionine = 2-methyladenosine(37) in tRNA + 5'-deoxyadenosine + L-methionine + 2 oxidized [2Fe-2S]-[ferredoxin] + S-adenosyl-L-homocysteine. In terms of biological role, specifically methylates position 2 of adenine 2503 in 23S rRNA and position 2 of adenine 37 in tRNAs. The chain is Probable dual-specificity RNA methyltransferase RlmN from Clostridium perfringens (strain SM101 / Type A).